A 262-amino-acid polypeptide reads, in one-letter code: Sulfur carrier protein FdhD (262 aa).

Cys107 (cysteine persulfide intermediate) is an active-site residue.

It belongs to the FdhD family.

Its subcellular location is the cytoplasm. Required for formate dehydrogenase (FDH) activity. Acts as a sulfur carrier protein that transfers sulfur from IscS to the molybdenum cofactor prior to its insertion into FDH. The polypeptide is Sulfur carrier protein FdhD (Bacillus subtilis (strain 168)).